The chain runs to 1137 residues: Nonsense-mediated mRNA decay factor SMG7 (1137 aa).

Position 2 is an N-acetylserine (serine 2). TPR repeat units lie at residues 152-185 (QHCL…VPSN) and 187-219 (QPYN…KFPF). Position 520 is a phosphoserine (serine 520). Positions 620 to 631 (ELRKTPVSEARK) are enriched in basic and acidic residues. Disordered stretches follow at residues 620–646 (ELRK…NSQF), 696–794 (LQPT…YQQA), 890–911 (IDRR…VPRM), 988–1055 (PSLP…AMGG), 1069–1089 (SSWH…PSME), and 1104–1137 (SSSM…NPPH). The residue at position 624 (threonine 624) is a Phosphothreonine. 2 stretches are compositionally biased toward polar residues: residues 633-646 (PVTQ…NSQF) and 696-722 (LQPT…SQQR). Over residues 723–770 (PSGPGPMNQGPQQSQPPSQQPLTSLPAQPTAQSTSQLQVQALTQQQQS) the composition is skewed to low complexity. Residues serine 781 and serine 897 each carry the phosphoserine modification. Polar residues predominate over residues 988 to 998 (PSLPASSDHST). Low complexity predominate over residues 999 to 1025 (PASQSPHSSNPSSLPSSPPTHNHNSVP). Basic and acidic residues predominate over residues 1036–1050 (DNRDRRTADRWKTDK). The span at 1069–1081 (SSWHQASTPSGTW) shows a compositional bias: polar residues. Residues 1117–1131 (QLLMQQKQKQQRGQG) show a composition bias toward low complexity.

As to quaternary structure, part of a complex that contains SMG5, SMG7, PPP2CA, a short isoform of UPF3A (isoform UPF3AS, but not isoform UPF3AL) and phosphorylated UPF1. Interacts with DHX34; the interaction is RNA-independent.

The protein localises to the cytoplasm. It is found in the nucleus. Its function is as follows. Plays a role in nonsense-mediated mRNA decay. Recruits UPF1 to cytoplasmic mRNA decay bodies. Together with SMG5 is thought to provide a link to the mRNA degradation machinery involving exonucleolytic pathways, and to serve as an adapter for UPF1 to protein phosphatase 2A (PP2A), thereby triggering UPF1 dephosphorylation. The protein is Nonsense-mediated mRNA decay factor SMG7 of Homo sapiens (Human).